Here is a 358-residue protein sequence, read N- to C-terminus: Photosystem II protein D1 2 (358 aa).

Transmembrane regions (helical) follow at residues 28–45 (YVGWFGVLMIPCLLAATI), 117–132 (HFLIGISAYMGRQWEL), and 141–155 (WICVAYSAPLSAAMA). H117 serves as a coordination point for chlorophyll a. Y125 contributes to the pheophytin a binding site. Residues D169 and E188 each contribute to the [CaMn4O5] cluster site. A helical transmembrane segment spans residues 196 to 217 (FHMLGVAGVFGGSLFSAMHGSL). H197 serves as a coordination point for chlorophyll a. A quinone contacts are provided by residues H214 and 263 to 264 (SF). H214 serves as a coordination point for Fe cation. H271 is a Fe cation binding site. The helical transmembrane segment at 273–287 (FLGAWPVVGIWFTSM) threads the bilayer. [CaMn4O5] cluster contacts are provided by H331, E332, D341, and A343. The propeptide occupies 344-358 (AAESTPVALQAPAIG).

Belongs to the reaction center PufL/M/PsbA/D family. As to quaternary structure, PSII is composed of 1 copy each of membrane proteins PsbA, PsbB, PsbC, PsbD, PsbE, PsbF, PsbH, PsbI, PsbJ, PsbK, PsbL, PsbM, PsbT, PsbX, PsbY, PsbZ, Psb30/Ycf12, peripheral proteins PsbO, CyanoQ (PsbQ), PsbU, PsbV and a large number of cofactors. It forms dimeric complexes. The D1/D2 heterodimer binds P680, chlorophylls that are the primary electron donor of PSII, and subsequent electron acceptors. It shares a non-heme iron and each subunit binds pheophytin, quinone, additional chlorophylls, carotenoids and lipids. D1 provides most of the ligands for the Mn4-Ca-O5 cluster of the oxygen-evolving complex (OEC). There is also a Cl(-1) ion associated with D1 and D2, which is required for oxygen evolution. The PSII complex binds additional chlorophylls, carotenoids and specific lipids. serves as cofactor. In terms of processing, tyr-160 forms a radical intermediate that is referred to as redox-active TyrZ, YZ or Y-Z. Post-translationally, C-terminally processed by CtpA; processing is essential to allow assembly of the oxygen-evolving complex and thus photosynthetic growth.

The protein resides in the cellular thylakoid membrane. The enzyme catalyses 2 a plastoquinone + 4 hnu + 2 H2O = 2 a plastoquinol + O2. Functionally, photosystem II (PSII) is a light-driven water:plastoquinone oxidoreductase that uses light energy to abstract electrons from H(2)O, generating O(2) and a proton gradient subsequently used for ATP formation. It consists of a core antenna complex that captures photons, and an electron transfer chain that converts photonic excitation into a charge separation. The D1/D2 (PsbA/PsbD) reaction center heterodimer binds P680, the primary electron donor of PSII as well as several subsequent electron acceptors. The sequence is that of Photosystem II protein D1 2 from Synechococcus sp. (strain CC9605).